Here is a 264-residue protein sequence, read N- to C-terminus: S-adenosylmethionine decarboxylase proenzyme (264 aa).

Catalysis depends on Ser112, which acts as the Schiff-base intermediate with substrate; via pyruvic acid. Ser112 bears the Pyruvic acid (Ser); by autocatalysis mark. His117 functions as the Proton acceptor; for processing activity in the catalytic mechanism. Cys140 serves as the catalytic Proton donor; for catalytic activity.

This sequence belongs to the prokaryotic AdoMetDC family. Type 2 subfamily. Heterooctamer of four alpha and four beta chains arranged as a tetramer of alpha/beta heterodimers. The cofactor is pyruvate. Post-translationally, is synthesized initially as an inactive proenzyme. Formation of the active enzyme involves a self-maturation process in which the active site pyruvoyl group is generated from an internal serine residue via an autocatalytic post-translational modification. Two non-identical subunits are generated from the proenzyme in this reaction, and the pyruvate is formed at the N-terminus of the alpha chain, which is derived from the carboxyl end of the proenzyme. The post-translation cleavage follows an unusual pathway, termed non-hydrolytic serinolysis, in which the side chain hydroxyl group of the serine supplies its oxygen atom to form the C-terminus of the beta chain, while the remainder of the serine residue undergoes an oxidative deamination to produce ammonia and the pyruvoyl group blocking the N-terminus of the alpha chain.

It carries out the reaction S-adenosyl-L-methionine + H(+) = S-adenosyl 3-(methylsulfanyl)propylamine + CO2. It functions in the pathway amine and polyamine biosynthesis; S-adenosylmethioninamine biosynthesis; S-adenosylmethioninamine from S-adenosyl-L-methionine: step 1/1. Its function is as follows. Catalyzes the decarboxylation of S-adenosylmethionine to S-adenosylmethioninamine (dcAdoMet), the propylamine donor required for the synthesis of the polyamines spermine and spermidine from the diamine putrescine. This is S-adenosylmethionine decarboxylase proenzyme from Serratia proteamaculans (strain 568).